The chain runs to 384 residues: O-phospho-L-seryl-tRNA:Cys-tRNA synthase 1 (384 aa).

Residues 88 to 89 (AR), Asn195, and 218 to 220 (SGH) each bind pyridoxal 5'-phosphate. An N6-(pyridoxal phosphate)lysine modification is found at Lys221.

The protein belongs to the SepCysS family. In terms of assembly, homodimer. Interacts with SepRS. The cofactor is pyridoxal 5'-phosphate.

The enzyme catalyses O-phospho-L-seryl-tRNA(Cys) + hydrogen sulfide + H(+) = L-cysteinyl-tRNA(Cys) + phosphate. Its function is as follows. Converts O-phospho-L-seryl-tRNA(Cys) (Sep-tRNA(Cys)) to L-cysteinyl-tRNA(Cys) (Cys-tRNA(Cys)). This Methanocella arvoryzae (strain DSM 22066 / NBRC 105507 / MRE50) protein is O-phospho-L-seryl-tRNA:Cys-tRNA synthase 1.